The sequence spans 212 residues: Troponin I, cardiac muscle (212 aa).

The segment covering 1 to 11 (MADRSGGSTAG) has biased composition (polar residues). The tract at residues 1–45 (MADRSGGSTAGDTVPAPPPVRRRSSANYRAYATEPHAKKKSKISA) is disordered. Ala2 is modified (N-acetylalanine). The residue at position 5 (Ser5) is a Phosphoserine. Ser24 and Ser25 each carry phosphoserine; by PKA and PKD/PRKD1. Phosphotyrosine is present on Tyr28. Thr33 is modified (phosphothreonine; by STK4/MST1). The interval 34–81 (EPHAKKKSKISASRKLQLKTLMLQIAKQELEREAEERRGEKGRALSTR) is involved in binding TNC. 2 positions are modified to phosphoserine; by PKC/PRKCE: Ser44 and Ser46. Thr53 bears the Phosphothreonine; by STK4/MST1 mark. At Ser79 the chain carries Phosphoserine. Position 80 is a phosphothreonine (Thr80). Residues 131–151 (NQKIFDLRGKFKRPTLRRVRI) are involved in binding TNC and actin. Position 145 is a phosphothreonine; by STK4/MST1 (Thr145). At Ser152 the chain carries Phosphoserine; by PAK3. A Phosphothreonine modification is found at Thr183. The residue at position 201 (Ser201) is a Phosphoserine.

This sequence belongs to the troponin I family. Interacts with TRIM63. Binds to actin and tropomyosin. Interacts with STK4/MST1. Phosphorylated at Ser-24 and Ser-25 by PRKD1; phosphorylation reduces myofilament calcium sensitivity. Phosphorylated preferentially at Thr-33. Phosphorylation by STK4/MST1 alters its binding affinity to TNNC1 (cardiac Tn-C) and TNNT2 (cardiac Tn-T). Phosphorylated at Ser-44 and Ser-46 by PRKCE; phosphorylation increases myocardium contractile dysfunction.

Functionally, troponin I is the inhibitory subunit of troponin, the thin filament regulatory complex which confers calcium-sensitivity to striated muscle actomyosin ATPase activity. The polypeptide is Troponin I, cardiac muscle (TNNI3) (Bos taurus (Bovine)).